Reading from the N-terminus, the 273-residue chain is Transmembrane epididymal protein 1 (273 aa).

Helical transmembrane passes span 34 to 54, 72 to 92, 96 to 116, 129 to 149, 158 to 178, and 195 to 215; these read IVTG…GMVL, LTMF…KNVL, CVGL…LLMV, VYSL…AELW, LMET…GFIL, and IMFV…FLLG.

This sequence belongs to the TMEM45 family.

The protein localises to the membrane. The polypeptide is Transmembrane epididymal protein 1 (TEDDM1) (Homo sapiens (Human)).